Here is a 581-residue protein sequence, read N- to C-terminus: Pentatricopeptide repeat-containing protein At1g34160 (581 aa).

9 PPR repeats span residues 67–101 (LTNDWNAIIRGFAGSSHPSLAFSWYRSMLQQSSSS), 108–142 (DALTCSFTLKACARALCSSAMDQLHCQINRRGLSA), 143–173 (DSLLCTTLLDAYSKNGDLISAYKLFDEMPVR), 174–208 (DVASWNALIAGLVSGNRASEAMELYKRMETEGIRR), 209–239 (SEVTVVAALGACSHLGDVKEGENIFHGYSND), 240–270 (NVIVSNAAIDMYSKCGFVDKAYQVFEQFTGK), 272–306 (SVVTWNTMITGFAVHGEAHRALEIFDKLEDNGIKP), 307–341 (DDVSYLAALTACRHAGLVEYGLSVFNNMACKGVER), and 342–372 (NMKHYGCVVDLLSRAGRLREAHDIICSMSMI). The tract at residues 377 to 452 (LWQSLLGASE…IPGLSYIEAK (76 aa)) is type E motif. The tract at residues 453-483 (GTIHEFYNSDKSHEQWREIYEKIDEIRFKIR) is type E(+) motif. Positions 484–581 (EDGYVAQTGL…DGSCSCRDFW (98 aa)) are type DYW motif.

This sequence belongs to the PPR family. PCMP-H subfamily.

This Arabidopsis thaliana (Mouse-ear cress) protein is Pentatricopeptide repeat-containing protein At1g34160 (PCMP-H68).